We begin with the raw amino-acid sequence, 402 residues long: Multidrug resistance protein MdtH (402 aa).

Topologically, residues 1 to 12 (MSRVSQARNLGK) are cytoplasmic. Residues 13-33 (YFLLIDNMLVVLGFFVVFPLI) traverse the membrane as a helical segment. Residues 34-98 (SIRFVDQMGW…GFATMGIAHE (65 aa)) lie on the Periplasmic side of the membrane. A helical membrane pass occupies residues 99–116 (PWLLWFSCLLSGLGGTLF). Residues 117–138 (DPPRSALVVKLIRPQQRCRFFS) are Cytoplasmic-facing. A helical membrane pass occupies residues 139-159 (LLMMQDSAGAVIGALLGSWLL). The Periplasmic portion of the chain corresponds to 160-164 (QYDFR). Residues 165 to 185 (LVCATGAVLFVLCAAFNAWLL) traverse the membrane as a helical segment. Topologically, residues 186 to 213 (PAWKLSTVRTPVREGMTRVMRDKRFVTY) are cytoplasmic. The chain crosses the membrane as a helical span at residues 214-234 (VLTLAGYYMLAVQVMLMLPIM). At 235–243 (VNDVAGAPS) the chain is on the periplasmic side. A helical membrane pass occupies residues 244 to 264 (AVKWMYAIEACLSLTLLYPIA). Topologically, residues 265–276 (RWSEKHFRLEHR) are cytoplasmic. A helical membrane pass occupies residues 277 to 297 (LMAGLLIMSLSMMPVGMVSGL). Residues 298-299 (QQ) are Periplasmic-facing. A helical membrane pass occupies residues 300-320 (LFTLICLFYIGSIIAEPARET). At 321–339 (LSALLADARARGSYMGFSR) the chain is on the cytoplasmic side. Residues 340–360 (LGLAIGGAIGYIGGGWLFDLG) form a helical membrane-spanning segment. At 361 to 367 (KSAHQPE) the chain is on the periplasmic side. Residues 368 to 388 (LPWMMLGIIGIFTFLALGWQF) traverse the membrane as a helical segment. The Cytoplasmic segment spans residues 389–402 (SQKRATRRLLERDA).

This sequence belongs to the major facilitator superfamily. DHA1 family. MdtH (TC 2.A.1.2.21) subfamily.

The protein localises to the cell inner membrane. In Shigella sonnei (strain Ss046), this protein is Multidrug resistance protein MdtH.